A 274-amino-acid chain; its full sequence is Large ribosomal subunit protein uL2 (274 aa).

Residues 224–259 (AMNPVDHPHGGGEGRTSGGRHPVTPWGIPTKGYKTR) are disordered.

It belongs to the universal ribosomal protein uL2 family. In terms of assembly, part of the 50S ribosomal subunit. Forms a bridge to the 30S subunit in the 70S ribosome.

Functionally, one of the primary rRNA binding proteins. Required for association of the 30S and 50S subunits to form the 70S ribosome, for tRNA binding and peptide bond formation. It has been suggested to have peptidyltransferase activity; this is somewhat controversial. Makes several contacts with the 16S rRNA in the 70S ribosome. The chain is Large ribosomal subunit protein uL2 from Geobacter sp. (strain M21).